Here is a 220-residue protein sequence, read N- to C-terminus: Octanoyltransferase (220 aa).

A BPL/LPL catalytic domain is found at 36 to 212 (ADSPDQFWLV…CLARQLGRRL (177 aa)). Substrate is bound by residues 75–82 (RGGQVTYH), 142–144 (SLG), and 155–157 (GVA). The active-site Acyl-thioester intermediate is cysteine 173.

This sequence belongs to the LipB family.

The protein localises to the cytoplasm. It catalyses the reaction octanoyl-[ACP] + L-lysyl-[protein] = N(6)-octanoyl-L-lysyl-[protein] + holo-[ACP] + H(+). It participates in protein modification; protein lipoylation via endogenous pathway; protein N(6)-(lipoyl)lysine from octanoyl-[acyl-carrier-protein]: step 1/2. In terms of biological role, catalyzes the transfer of endogenously produced octanoic acid from octanoyl-acyl-carrier-protein onto the lipoyl domains of lipoate-dependent enzymes. Lipoyl-ACP can also act as a substrate although octanoyl-ACP is likely to be the physiological substrate. In Chromohalobacter salexigens (strain ATCC BAA-138 / DSM 3043 / CIP 106854 / NCIMB 13768 / 1H11), this protein is Octanoyltransferase.